The chain runs to 185 residues: MLNEIYTKQKQQSDKSLEALKKDFTTIRTGKVNINILDHVHVDYYGSQTPLNQVATVLATDASTISITPWEKPMLKTIESAIAAANIGVNPNNDGESVKLFFPPMTREQREENAKSAKAMGEKAKVAIRNIRKDANDAVKKLEKDKAISEDEAKKAYDEVQKQTDNYTTKIDELVKNKEAELLKV.

This sequence belongs to the RRF family.

The protein localises to the cytoplasm. Responsible for the release of ribosomes from messenger RNA at the termination of protein biosynthesis. May increase the efficiency of translation by recycling ribosomes from one round of translation to another. The chain is Ribosome-recycling factor from Campylobacter lari (strain RM2100 / D67 / ATCC BAA-1060).